The following is a 252-amino-acid chain: uncharacterized protein (252 aa).

The protein belongs to the LarE family.

This is an uncharacterized protein from Methanocaldococcus jannaschii (strain ATCC 43067 / DSM 2661 / JAL-1 / JCM 10045 / NBRC 100440) (Methanococcus jannaschii).